The following is a 623-amino-acid chain: UvrABC system protein C (623 aa).

Residues 28 to 105 form the GIY-YIG domain; sequence GAPGVYRMLD…IKQLKPKYNV (78 aa). The UVR domain maps to 215–250; the sequence is TRVQEELAEQMMAASEAMEFERAAALRDRIRALTTV.

This sequence belongs to the UvrC family. In terms of assembly, interacts with UvrB in an incision complex.

Its subcellular location is the cytoplasm. Its function is as follows. The UvrABC repair system catalyzes the recognition and processing of DNA lesions. UvrC both incises the 5' and 3' sides of the lesion. The N-terminal half is responsible for the 3' incision and the C-terminal half is responsible for the 5' incision. The polypeptide is UvrABC system protein C (Ruegeria pomeroyi (strain ATCC 700808 / DSM 15171 / DSS-3) (Silicibacter pomeroyi)).